Here is a 107-residue protein sequence, read N- to C-terminus: C-X-C motif chemokine 3 (107 aa).

A signal peptide spans 1 to 34; sequence MAHATLSAAPSNPRLLRVALLLLLLVAASRRAAG. 2 disulfides stabilise this stretch: Cys43–Cys69 and Cys45–Cys85.

This sequence belongs to the intercrine alpha (chemokine CxC) family. In terms of processing, N-terminal processed form GRO-gamma(5-73) is produced by proteolytic cleavage after secretion from peripheral blood monocytes.

The protein resides in the secreted. In terms of biological role, ligand for CXCR2. Has chemotactic activity for neutrophils. May play a role in inflammation and exert its effects on endothelial cells in an autocrine fashion. In vitro, the processed form GRO-gamma(5-73) shows a fivefold higher chemotactic activity for neutrophilic granulocytes. This chain is C-X-C motif chemokine 3 (CXCL3), found in Homo sapiens (Human).